Consider the following 334-residue polypeptide: NH(3)-dependent NAD(+) synthetase (334 aa).

47 to 54 is a binding site for ATP; the sequence is GLSGGIDS. Mg(2+) is bound at residue D53. Position 183 (R183) interacts with deamido-NAD(+). Position 203 (T203) interacts with ATP. E208 provides a ligand contact to Mg(2+). 2 residues coordinate deamido-NAD(+): K216 and D223. Residues K232 and T254 each contribute to the ATP site.

It belongs to the NAD synthetase family. In terms of assembly, homodimer.

It carries out the reaction deamido-NAD(+) + NH4(+) + ATP = AMP + diphosphate + NAD(+) + H(+). It participates in cofactor biosynthesis; NAD(+) biosynthesis; NAD(+) from deamido-NAD(+) (ammonia route): step 1/1. In terms of biological role, catalyzes the ATP-dependent amidation of deamido-NAD to form NAD. Uses ammonia as a nitrogen source. This is NH(3)-dependent NAD(+) synthetase from Rhizobium meliloti (strain 1021) (Ensifer meliloti).